The following is a 181-amino-acid chain: Transmembrane protein 154 (181 aa).

The first 22 residues, 1-22 (MTVPCAALVLALGLAFGQSSQG), serve as a signal peptide directing secretion. The disordered stretch occupies residues 19–47 (SSQGNDEESEYSGQSITEEENSEDETTRS). At 23–74 (NDEESEYSGQSITEEENSEDETTRSALATVTTEALAENVNSTHTNDTSNQVE) the chain is on the extracellular side. The helical transmembrane segment at 75–95 (FILMVAIPLAALLILLFMVLI) threads the bilayer. Over 96 to 181 (ATYFKSKRPK…PNPSPSDNES (86 aa)) the chain is Cytoplasmic. The interval 103–122 (RPKQEPSSQGSQSALQTHEL) is disordered. Residues 107 to 118 (EPSSQGSQSALQ) show a composition bias toward polar residues. Tyrosine 160 bears the Phosphotyrosine mark. Residues 161 to 181 (ECLPTLKEEKEPNPSPSDNES) are disordered. At serine 177 the chain carries Phosphoserine.

Its subcellular location is the membrane. This is Transmembrane protein 154 (Tmem154) from Mus musculus (Mouse).